The chain runs to 102 residues: Large ribosomal subunit protein bL21 (102 aa).

Belongs to the bacterial ribosomal protein bL21 family. In terms of assembly, part of the 50S ribosomal subunit. Contacts protein L20.

Functionally, this protein binds to 23S rRNA in the presence of protein L20. In Lactiplantibacillus plantarum (strain ATCC BAA-793 / NCIMB 8826 / WCFS1) (Lactobacillus plantarum), this protein is Large ribosomal subunit protein bL21.